Reading from the N-terminus, the 286-residue chain is Bifunctional protein FolD (286 aa).

NADP(+)-binding positions include 166-168 (GAS) and isoleucine 232.

The protein belongs to the tetrahydrofolate dehydrogenase/cyclohydrolase family. In terms of assembly, homodimer.

The enzyme catalyses (6R)-5,10-methylene-5,6,7,8-tetrahydrofolate + NADP(+) = (6R)-5,10-methenyltetrahydrofolate + NADPH. It catalyses the reaction (6R)-5,10-methenyltetrahydrofolate + H2O = (6R)-10-formyltetrahydrofolate + H(+). It participates in one-carbon metabolism; tetrahydrofolate interconversion. Functionally, catalyzes the oxidation of 5,10-methylenetetrahydrofolate to 5,10-methenyltetrahydrofolate and then the hydrolysis of 5,10-methenyltetrahydrofolate to 10-formyltetrahydrofolate. The polypeptide is Bifunctional protein FolD (Blochmanniella pennsylvanica (strain BPEN)).